The chain runs to 150 residues: UPF0178 protein PC1_0756 (150 aa).

It belongs to the UPF0178 family.

This is UPF0178 protein PC1_0756 from Pectobacterium carotovorum subsp. carotovorum (strain PC1).